The following is a 118-amino-acid chain: Large ribosomal subunit protein uL18 (118 aa).

Belongs to the universal ribosomal protein uL18 family. In terms of assembly, part of the 50S ribosomal subunit; part of the 5S rRNA/L5/L18/L25 subcomplex. Contacts the 5S and 23S rRNAs.

This is one of the proteins that bind and probably mediate the attachment of the 5S RNA into the large ribosomal subunit, where it forms part of the central protuberance. The sequence is that of Large ribosomal subunit protein uL18 from Limosilactobacillus reuteri (strain DSM 20016) (Lactobacillus reuteri).